A 557-amino-acid polypeptide reads, in one-letter code: Proline--tRNA ligase (557 aa).

This sequence belongs to the class-II aminoacyl-tRNA synthetase family. ProS type 1 subfamily. As to quaternary structure, homodimer.

The protein localises to the cytoplasm. It carries out the reaction tRNA(Pro) + L-proline + ATP = L-prolyl-tRNA(Pro) + AMP + diphosphate. Its function is as follows. Catalyzes the attachment of proline to tRNA(Pro) in a two-step reaction: proline is first activated by ATP to form Pro-AMP and then transferred to the acceptor end of tRNA(Pro). As ProRS can inadvertently accommodate and process non-cognate amino acids such as alanine and cysteine, to avoid such errors it has two additional distinct editing activities against alanine. One activity is designated as 'pretransfer' editing and involves the tRNA(Pro)-independent hydrolysis of activated Ala-AMP. The other activity is designated 'posttransfer' editing and involves deacylation of mischarged Ala-tRNA(Pro). The misacylated Cys-tRNA(Pro) is not edited by ProRS. The sequence is that of Proline--tRNA ligase from Baumannia cicadellinicola subsp. Homalodisca coagulata.